Reading from the N-terminus, the 102-residue chain is MYKDEMIQLHQFLVYVLKYLENGYDIKDECEEYFSLNISPHHIHRTKAEHKYAIFVLSSAISEILARKEGNNLPPNVVNGLSELARRSRKEVVKMEARLEAK.

This sequence belongs to the UPF0058 family.

The chain is UPF0058 protein MTH_224 from Methanothermobacter thermautotrophicus (strain ATCC 29096 / DSM 1053 / JCM 10044 / NBRC 100330 / Delta H) (Methanobacterium thermoautotrophicum).